The following is a 156-amino-acid chain: Aspartate 1-decarboxylase (156 aa).

The active-site Schiff-base intermediate with substrate; via pyruvic acid is Ser29. The residue at position 29 (Ser29) is a Pyruvic acid (Ser). Thr61 serves as a coordination point for substrate. The Proton donor role is filled by Tyr62. A substrate-binding site is contributed by 77-79 (GAA).

This sequence belongs to the PanD family. In terms of assembly, heterooctamer of four alpha and four beta subunits. Pyruvate serves as cofactor. In terms of processing, is synthesized initially as an inactive proenzyme, which is activated by self-cleavage at a specific serine bond to produce a beta-subunit with a hydroxyl group at its C-terminus and an alpha-subunit with a pyruvoyl group at its N-terminus.

The protein localises to the cytoplasm. It carries out the reaction L-aspartate + H(+) = beta-alanine + CO2. The protein operates within cofactor biosynthesis; (R)-pantothenate biosynthesis; beta-alanine from L-aspartate: step 1/1. In terms of biological role, catalyzes the pyruvoyl-dependent decarboxylation of aspartate to produce beta-alanine. This chain is Aspartate 1-decarboxylase, found in Rhodopirellula baltica (strain DSM 10527 / NCIMB 13988 / SH1).